The following is a 117-amino-acid chain: Cell division protein FtsB (117 aa).

At methionine 1–tryptophan 6 the chain is on the cytoplasmic side. The chain crosses the membrane as a helical span at residues methionine 7–phenylalanine 24. The Periplasmic segment spans residues glycine 25 to proline 117. Positions serine 29 to alanine 69 form a coiled coil.

It belongs to the FtsB family. Part of a complex composed of FtsB, FtsL and FtsQ.

The protein localises to the cell inner membrane. Functionally, essential cell division protein. May link together the upstream cell division proteins, which are predominantly cytoplasmic, with the downstream cell division proteins, which are predominantly periplasmic. The sequence is that of Cell division protein FtsB from Stenotrophomonas maltophilia (strain K279a).